Here is a 709-residue protein sequence, read N- to C-terminus: Phosphoribosylformylglycinamidine synthase subunit PurL (709 aa).

His-36 is an active-site residue. The ATP site is built by Tyr-39 and Lys-80. A Mg(2+)-binding site is contributed by Glu-82. Substrate-binding positions include 83 to 86 (SHNH) and Arg-105. The active-site Proton acceptor is His-84. Asp-106 serves as a coordination point for Mg(2+). A substrate-binding site is contributed by Gln-226. Residue Asp-252 coordinates Mg(2+). Position 294–296 (294–296 (ETQ)) interacts with substrate. ATP contacts are provided by Asp-470 and Gly-507. Ser-510 contacts substrate.

This sequence belongs to the FGAMS family. Monomer. Part of the FGAM synthase complex composed of 1 PurL, 1 PurQ and 2 PurS subunits.

It is found in the cytoplasm. The catalysed reaction is N(2)-formyl-N(1)-(5-phospho-beta-D-ribosyl)glycinamide + L-glutamine + ATP + H2O = 2-formamido-N(1)-(5-O-phospho-beta-D-ribosyl)acetamidine + L-glutamate + ADP + phosphate + H(+). The protein operates within purine metabolism; IMP biosynthesis via de novo pathway; 5-amino-1-(5-phospho-D-ribosyl)imidazole from N(2)-formyl-N(1)-(5-phospho-D-ribosyl)glycinamide: step 1/2. In terms of biological role, part of the phosphoribosylformylglycinamidine synthase complex involved in the purines biosynthetic pathway. Catalyzes the ATP-dependent conversion of formylglycinamide ribonucleotide (FGAR) and glutamine to yield formylglycinamidine ribonucleotide (FGAM) and glutamate. The FGAM synthase complex is composed of three subunits. PurQ produces an ammonia molecule by converting glutamine to glutamate. PurL transfers the ammonia molecule to FGAR to form FGAM in an ATP-dependent manner. PurS interacts with PurQ and PurL and is thought to assist in the transfer of the ammonia molecule from PurQ to PurL. The sequence is that of Phosphoribosylformylglycinamidine synthase subunit PurL from Saccharolobus islandicus (strain M.16.4 / Kamchatka #3) (Sulfolobus islandicus).